The chain runs to 603 residues: Phosphoenolpyruvate carboxykinase [GTP] (603 aa).

Substrate-binding positions include arginine 87 and 209 to 211 (YAG). 2 residues coordinate Mn(2+): lysine 218 and histidine 237. Residue serine 258 participates in substrate binding. Position 259–264 (259–264 (GSGKTS)) interacts with GTP. Serine 260 is an active-site residue. Position 275 (aspartate 275) interacts with Mn(2+). 365–367 (NAR) contacts substrate. Positions 367 and 398 each coordinate GTP.

Belongs to the phosphoenolpyruvate carboxykinase [GTP] family. Mn(2+) serves as cofactor.

The protein localises to the cytoplasm. It carries out the reaction oxaloacetate + GTP = phosphoenolpyruvate + GDP + CO2. The protein operates within carbohydrate biosynthesis; gluconeogenesis. Functionally, catalyzes the conversion of oxaloacetate (OAA) to phosphoenolpyruvate (PEP), the rate-limiting step in the metabolic pathway that produces glucose from lactate and other precursors derived from the citric acid cycle. The polypeptide is Phosphoenolpyruvate carboxykinase [GTP] (Saccharolobus solfataricus (strain ATCC 35092 / DSM 1617 / JCM 11322 / P2) (Sulfolobus solfataricus)).